Consider the following 957-residue polypeptide: Histone-lysine N-methyltransferase, H3 lysine-9 specific SUVH3 (957 aa).

The YDG domain maps to 73–243 (GHPPGVALGD…PQVCKFLMHG (171 aa)). Positions 182–209 (EAGGGEGGGGGEGGGGAKKGKGGKGGGK) are disordered. Positions 183–198 (AGGGEGGGGGEGGGGA) are enriched in gly residues. In terms of domain architecture, Pre-SET spans 319 to 441 (DVSGGQEAVP…HECGDGCSAK (123 aa)). Residues 455–920 (LPLEVFMTES…QLEELSYNYG (466 aa)) enclose the SET domain. Disordered regions lie at residues 552–595 (DAAR…GGAE), 611–647 (AAGTAPGAGDNMDGVEGPAAQRSGGEEAAAGPGSSGA), and 783–805 (PPALPSTSDVGNGGTTGSGGGGG). Low complexity predominate over residues 560–578 (QQPQQQQPQQQQQQPAAGG). Over residues 793 to 805 (GNGGTTGSGGGGG) the composition is skewed to gly residues. Residues 941 to 957 (FVMQCNCGAVGCIGNLM) form the Post-SET domain.

It belongs to the class V-like SAM-binding methyltransferase superfamily. Histone-lysine methyltransferase family. Suvar3-9 subfamily.

Its subcellular location is the nucleus. It is found in the chromosome. It catalyses the reaction L-lysyl(9)-[histone H3] + S-adenosyl-L-methionine = N(6)-methyl-L-lysyl(9)-[histone H3] + S-adenosyl-L-homocysteine + H(+). Histone methyltransferase. Monomethylates specifically 'Lys-9' of histone H3. H3 'Lys-9Me1' (H3K9me1) functions as an epigenetic mark of repressed chromatin. This Chlamydomonas reinhardtii (Chlamydomonas smithii) protein is Histone-lysine N-methyltransferase, H3 lysine-9 specific SUVH3 (SUVH3).